The chain runs to 345 residues: 1-aminocyclopropane-1-carboxylate oxidase homolog 7 (345 aa).

Lys-16 is covalently cross-linked (Glycyl lysine isopeptide (Lys-Gly) (interchain with G-Cter in ubiquitin)). The Fe2OG dioxygenase domain maps to 194-293; it reads KGLHMICHYY…RISIACFFSS (100 aa). Residues His-218, Asp-220, and His-274 each coordinate Fe cation. Position 284 (Arg-284) interacts with 2-oxoglutarate.

This sequence belongs to the iron/ascorbate-dependent oxidoreductase family. Requires Fe(2+) as cofactor.

In Arabidopsis thaliana (Mouse-ear cress), this protein is 1-aminocyclopropane-1-carboxylate oxidase homolog 7.